The primary structure comprises 651 residues: Transcription termination factor FttA (651 aa).

Residues 1-200 (MTFLIKRETQ…ITGLGGFREV (200 aa)) form an archaeal CPSF-KH domain region. Positions 12–79 (DQILRDIRAV…ISVRPDPEVL (68 aa)) are KHa. Positions 80–147 (LPPEEAEKLI…WAPKVVRTPP (68 aa)) are KHb. Residues 188–398 (WIRITGLGGF…LVMESTYGGA (211 aa)) are metallo-beta-lactamase N-terminus. Residues H256, H258, D260, H261, H344, and D367 each coordinate Zn(2+). The tract at residues 399-592 (NDIQMPREEA…MEVHTIDGFS (194 aa)) is beta-Casp. The tract at residues 593–651 (GHADRRELMNYVAKVRPRPERIITVHGEPQKCLDLATSIHRKFGISTRAPNNLDTIRLR) is metallo-beta-lactamase C-terminus. H618 provides a ligand contact to Zn(2+).

Belongs to the metallo-beta-lactamase superfamily. RNA-metabolizing metallo-beta-lactamase-like family. FttA subfamily. In terms of assembly, homodimer. Interacts with RNA polymerase (RNAP), interacts with the Spt4-Spt5 complex. Requires Zn(2+) as cofactor.

In terms of biological role, terminates transcription on the whole genome. Termination is linked to FttA-mediated RNA cleavage and does not require NTP hydrolysis. Cleaves endonucleolytically at the RNA exit channel of RNA polymerase (RNAP); the 5'-3' exonuclease activity of this protein degrades the nascent RNA released from RNAP. Functionally, has nuclease activity on single-stranded RNA. The polypeptide is Transcription termination factor FttA (Pyrococcus horikoshii (strain ATCC 700860 / DSM 12428 / JCM 9974 / NBRC 100139 / OT-3)).